A 288-amino-acid chain; its full sequence is Shikimate dehydrogenase (NADP(+)) (288 aa).

Residues S21–S23 and T68 contribute to the shikimate site. K72 functions as the Proton acceptor in the catalytic mechanism. N93 and D108 together coordinate shikimate. NADP(+)-binding positions include G132–A136 and L230. Y232 lines the shikimate pocket. G253 lines the NADP(+) pocket.

This sequence belongs to the shikimate dehydrogenase family. As to quaternary structure, homodimer.

The enzyme catalyses shikimate + NADP(+) = 3-dehydroshikimate + NADPH + H(+). The protein operates within metabolic intermediate biosynthesis; chorismate biosynthesis; chorismate from D-erythrose 4-phosphate and phosphoenolpyruvate: step 4/7. Functionally, involved in the biosynthesis of the chorismate, which leads to the biosynthesis of aromatic amino acids. Catalyzes the reversible NADPH linked reduction of 3-dehydroshikimate (DHSA) to yield shikimate (SA). In Crocosphaera subtropica (strain ATCC 51142 / BH68) (Cyanothece sp. (strain ATCC 51142)), this protein is Shikimate dehydrogenase (NADP(+)).